Reading from the N-terminus, the 253-residue chain is Triosephosphate isomerase, cytosolic (253 aa).

N10 and K12 together coordinate substrate. H96 functions as the Electrophile in the catalytic mechanism. Residue E166 is the Proton acceptor of the active site.

The protein belongs to the triosephosphate isomerase family. In terms of assembly, homodimer. In terms of tissue distribution, starchy endosperm.

Its subcellular location is the cytoplasm. It catalyses the reaction D-glyceraldehyde 3-phosphate = dihydroxyacetone phosphate. It participates in carbohydrate biosynthesis; gluconeogenesis. It functions in the pathway carbohydrate degradation; glycolysis; D-glyceraldehyde 3-phosphate from glycerone phosphate: step 1/1. In Hordeum vulgare (Barley), this protein is Triosephosphate isomerase, cytosolic.